The primary structure comprises 376 residues: Inactive CLIP domain-containing serine protease A28 (376 aa).

The signal sequence occupies residues 1 to 19 (MKVLLFCIVISLTTLIASG). Positions 24-80 (EELRCPGGYCVSKYLCPNGTFIDDIKHAQTTQLIGLRAGLDIDDFDDCNDYLLVCCQ) constitute a Clip domain. 3 cysteine pairs are disulfide-bonded: cysteine 28-cysteine 78, cysteine 33-cysteine 71, and cysteine 39-cysteine 79. Asparagine 41 carries N-linked (GlcNAc...) asparagine glycosylation. Positions 85–106 (PTATSTEKPATSDELIEPPPST) are disordered. One can recognise a Peptidase S1 domain in the interval 114-364 (NEGGLIYDLR…YVQWLNEHIV (251 aa)). Residues asparagine 125 and asparagine 279 are each glycosylated (N-linked (GlcNAc...) asparagine). 3 disulfides stabilise this stretch: cysteine 251–cysteine 321, cysteine 280–cysteine 301, and cysteine 311–cysteine 340. A glycan (N-linked (GlcNAc...) asparagine) is linked at asparagine 369.

Belongs to the peptidase S1 family. CLIP subfamily. As to quaternary structure, may form a heterodimer of a light chain and a heavy chain; disulfide-linked. Secreted as a full-length protein. Proteolytically cleaved into two chains which probably remain covalently linked. Cleavage is induced by fungus B.bassiana and Gram-positive or Gram-negative bacteria infection.

It is found in the secreted. Its function is as follows. Inactive serine protease which plays an essential role in the innate immune response against bacteria, fungi and protozoa infection by activating the melanization cascade. In the melanization cascade, acts downstream of TEP1, SPCLIP1 and CLIPA8 to promote CLIPC9 proteolytic cleavage. In the susceptible strain G3, appears to be dispensable for parasite P.berghei ookinete elimination which occurs by lysis. Required for the melanization of Gram-positive and Gram-negative bacteria. Required for the melanization of fungus B.bassiana. This Anopheles gambiae (African malaria mosquito) protein is Inactive CLIP domain-containing serine protease A28.